The primary structure comprises 1188 residues: DNA-directed RNA polymerase II subunit 2 (1188 aa).

Asp-800 lines the Mg(2+) pocket. Disordered stretches follow at residues Ser-852–Glu-871 and Lys-877–Asp-897. Residues Thr-879–Arg-892 show a composition bias toward polar residues. Zn(2+) is bound by residues Cys-1124, Cys-1127, Cys-1142, and Cys-1145. A C4-type zinc finger spans residues Cys-1124–Cys-1145.

This sequence belongs to the RNA polymerase beta chain family. Component of the RNA polymerase II complex consisting of at least 12 subunits.

The protein resides in the nucleus. It catalyses the reaction RNA(n) + a ribonucleoside 5'-triphosphate = RNA(n+1) + diphosphate. DNA-dependent RNA polymerase catalyzes the transcription of DNA into RNA using the four ribonucleoside triphosphates as substrates. Second largest component of RNA polymerase II which synthesizes mRNA precursors and many functional non-coding RNAs. Proposed to contribute to the polymerase catalytic activity and forms the polymerase active center together with the largest subunit. Pol II is the central component of the basal RNA polymerase II transcription machinery. It is composed of mobile elements that move relative to each other. NRPB2 is part of the core element with the central large cleft, the clamp element that moves to open and close the cleft and the jaws that are thought to grab the incoming DNA template. Functionally, essential for the completion of the three rounds of mitosis in female megaspores required for the development of mature gametophytes. The chain is DNA-directed RNA polymerase II subunit 2 (NRPB2) from Arabidopsis thaliana (Mouse-ear cress).